Consider the following 398-residue polypeptide: Nonsense-mediated decay protein 4 (398 aa).

The tract at residues 327 to 355 is disordered; sequence PVTSNYRGKNNRGRNNRGRRGNKRRERER. The segment covering 335–350 has biased composition (basic residues); the sequence is KNNRGRNNRGRRGNKR.

Its subcellular location is the cytoplasm. Involved in nonsense-mediated decay of mRNAs containing premature stop codons. The sequence is that of Nonsense-mediated decay protein 4 (NMD4) from Candida albicans (strain SC5314 / ATCC MYA-2876) (Yeast).